The primary structure comprises 340 residues: DNA-directed RNA polymerase subunit alpha (340 aa).

Residues 1 to 236 (MLSLSKNWNT…EQLQLFIAFE (236 aa)) are alpha N-terminal domain (alpha-NTD). The alpha C-terminal domain (alpha-CTD) stretch occupies residues 251–340 (FSPYLLKRVD…LSKRYEDSYN (90 aa)).

Belongs to the RNA polymerase alpha chain family. As to quaternary structure, homodimer. The RNAP catalytic core consists of 2 alpha, 1 beta, 1 beta' and 1 omega subunit. When a sigma factor is associated with the core the holoenzyme is formed, which can initiate transcription.

The catalysed reaction is RNA(n) + a ribonucleoside 5'-triphosphate = RNA(n+1) + diphosphate. Functionally, DNA-dependent RNA polymerase catalyzes the transcription of DNA into RNA using the four ribonucleoside triphosphates as substrates. The chain is DNA-directed RNA polymerase subunit alpha from Rickettsia typhi (strain ATCC VR-144 / Wilmington).